We begin with the raw amino-acid sequence, 131 residues long: Small ribosomal subunit protein uS19 (131 aa).

It belongs to the universal ribosomal protein uS19 family.

Its function is as follows. Protein S19 forms a complex with S13 that binds strongly to the 16S ribosomal RNA. The polypeptide is Small ribosomal subunit protein uS19 (Nitrosopumilus maritimus (strain SCM1)).